Here is a 261-residue protein sequence, read N- to C-terminus: 3'-5' ssDNA/RNA exonuclease TatD (261 aa).

3 residues coordinate a divalent metal cation: Glu-92, His-128, and His-153.

The protein belongs to the metallo-dependent hydrolases superfamily. TatD-type hydrolase family. TatD subfamily. Monomer. It depends on Mg(2+) as a cofactor.

The protein resides in the cytoplasm. Functionally, 3'-5' exonuclease that prefers single-stranded DNA and RNA. May play a role in the H(2)O(2)-induced DNA damage repair. The polypeptide is 3'-5' ssDNA/RNA exonuclease TatD (Erwinia billingiae (strain Eb661)).